A 329-amino-acid chain; its full sequence is Strigolactones hydrolase CXE15 (329 aa).

Residues H83–G85 carry the Involved in the stabilization of the negatively charged intermediate by the formation of the oxyanion hole motif. (-)-2'-epi-GR24 is bound by residues G85, G86, S169, and S170. S169 acts as the Nucleophile in catalysis. Active-site residues include E271 and H302.

It belongs to the 'GDXG' lipolytic enzyme family. In terms of tissue distribution, expressed in axillary buds, leaves, stems, hypocotyls, flowers, siliques, and vasculatures of shoots and roots.

The protein resides in the nucleus. The protein localises to the cytoplasm. It is found in the cytosol. It catalyses the reaction (-)-2'-epi-GR24 + H2O = (-)-2'-epi-GR24 ABC-rings + 5-hydroxy-3-methylfuran-2(5H)-one. It carries out the reaction 5-deoxystrigol + H2O = 5-deoxystrigol ABC-rings + 5-hydroxy-3-methylfuran-2(5H)-one. The enzyme catalyses orobanchol + H2O = orobanchol ABC-rings + 5-hydroxy-3-methylfuran-2(5H)-one. Its function is as follows. Binds to strigolactones (SLs) such as (-)-2'-epi-GR24(4DO), 5-deoxystrigol (5DS) and orobanchol, and catalyzes their hydrolysis; SL are phytohormones controlling shoot branching and communications between plants and microorganisms. Promotes shoot branching by dampening SL-inhibited axillary bud outgrowth. The protein is Strigolactones hydrolase CXE15 of Arabidopsis thaliana (Mouse-ear cress).